We begin with the raw amino-acid sequence, 260 residues long: RxLR effector protein BLR38 (260 aa).

The signal sequence occupies residues M1–G18. The RxLR signature appears at R46–R49. A Nuclear localuization signal (NLS) motif is present at residues M136–E148.

This sequence belongs to the RxLR effector family.

The protein localises to the secreted. It is found in the host nucleus. Secreted effector that triggers a robust hypersensitive response (HR) in Lactuca serriola LS102. The response to BLN06 was visible as strong necrosis. Although effector recognition is frequently associated with single dominant R gene loci, the recognition of BLR38 requires 2 unlinked loci that display incomplete dominance. This Bremia lactucae (Lettuce downy mildew) protein is RxLR effector protein BLR38.